Consider the following 159-residue polypeptide: Protein E6 (159 aa).

2 zinc fingers span residues 35–71 (CVYC…CGKC) and 108–144 (CYIC…CMQC).

This sequence belongs to the papillomaviridae E6 protein family. As to quaternary structure, forms homodimers. Interacts with ubiquitin-protein ligase UBE3A/E6-AP; this interaction stimulates UBE3A ubiquitin activity. Interacts with host TP53 and EP300; this interaction inhibits TP53 activity.

The protein localises to the host cytoplasm. Its subcellular location is the host nucleus. Plays a major role in the induction and maintenance of cellular transformation. E6 associates with host UBE3A/E6-AP ubiquitin-protein ligase and modulates its activity. Sequesters tumor suppressor TP53 in the host cytoplasm and modulates its activity by interacting with host EP300 that results in the reduction of TP53 acetylation and activation. In turn, apoptosis induced by DNA damage is inhibited. E6 also protects host keratinocytes from apoptosis by mediating the degradation of host BAK1. May also inhibit host immune response. In Homo sapiens (Human), this protein is Protein E6.